The following is a 210-amino-acid chain: Probable nicotinate-nucleotide adenylyltransferase (210 aa).

This sequence belongs to the NadD family.

It carries out the reaction nicotinate beta-D-ribonucleotide + ATP + H(+) = deamido-NAD(+) + diphosphate. It participates in cofactor biosynthesis; NAD(+) biosynthesis; deamido-NAD(+) from nicotinate D-ribonucleotide: step 1/1. Its function is as follows. Catalyzes the reversible adenylation of nicotinate mononucleotide (NaMN) to nicotinic acid adenine dinucleotide (NaAD). The protein is Probable nicotinate-nucleotide adenylyltransferase of Streptococcus pyogenes serotype M6 (strain ATCC BAA-946 / MGAS10394).